Reading from the N-terminus, the 74-residue chain is Guanine nucleotide-binding protein G(T) subunit gamma-T1 (74 aa).

Cysteine methyl ester is present on C71. C71 is lipidated: S-farnesyl cysteine. Residues 72-74 constitute a propeptide, removed in mature form; the sequence is VIS.

This sequence belongs to the G protein gamma family. In terms of assembly, g proteins are composed of 3 units, alpha, beta and gamma. Retinal rod outer segment.

Its subcellular location is the cell membrane. Functionally, guanine nucleotide-binding proteins (G proteins) are involved as a modulator or transducer in various transmembrane signaling systems. The beta and gamma chains are required for the GTPase activity, for replacement of GDP by GTP, and for G protein-effector interaction. The chain is Guanine nucleotide-binding protein G(T) subunit gamma-T1 (GNGT1) from Bos taurus (Bovine).